The following is a 255-amino-acid chain: tRNA (guanine-N(1)-)-methyltransferase (255 aa).

S-adenosyl-L-methionine-binding positions include Gly117 and 137 to 142; that span reads IGDYVL.

This sequence belongs to the RNA methyltransferase TrmD family. In terms of assembly, homodimer.

The protein resides in the cytoplasm. It catalyses the reaction guanosine(37) in tRNA + S-adenosyl-L-methionine = N(1)-methylguanosine(37) in tRNA + S-adenosyl-L-homocysteine + H(+). Specifically methylates guanosine-37 in various tRNAs. This chain is tRNA (guanine-N(1)-)-methyltransferase, found in Chromobacterium violaceum (strain ATCC 12472 / DSM 30191 / JCM 1249 / CCUG 213 / NBRC 12614 / NCIMB 9131 / NCTC 9757 / MK).